A 686-amino-acid chain; its full sequence is LEAF RUST 10 DISEASE-RESISTANCE LOCUS RECEPTOR-LIKE PROTEIN KINASE-like 1.3 (686 aa).

The signal sequence occupies residues 1 to 33 (MFSPVLFRFSKPNSFLVLLFFLSYIHFLPCAQS). Residues 34–264 (QREPCDTLFR…AGLSKKGKIG (231 aa)) lie on the Extracellular side of the membrane. Asn76, Asn93, Asn175, Asn190, and Asn236 each carry an N-linked (GlcNAc...) asparagine glycan. The chain crosses the membrane as a helical span at residues 265–285 (IGFASGFLGATLIGGCLLCIF). Topologically, residues 286–686 (IRRRKKLATQ…SSSNTTASSF (401 aa)) are cytoplasmic. The 276-residue stretch at 358 to 633 (ENFSKELGDG…DEIVEVLRVI (276 aa)) folds into the Protein kinase domain. ATP contacts are provided by residues 364-372 (LGDGGFGTV) and Lys386. Residue Tyr432 is modified to Phosphotyrosine. The active-site Proton acceptor is Asp482. Ser515 carries the post-translational modification Phosphoserine. Residues Thr516 and Thr521 each carry the phosphothreonine modification. Residue Tyr529 is modified to Phosphotyrosine. The disordered stretch occupies residues 657–686 (GLLKHGVPPPLSPETDKTTASSSNTTASSF). Positions 674 to 686 (TTASSSNTTASSF) are enriched in low complexity.

Belongs to the protein kinase superfamily. Ser/Thr protein kinase family.

The protein localises to the cell membrane. It carries out the reaction L-seryl-[protein] + ATP = O-phospho-L-seryl-[protein] + ADP + H(+). It catalyses the reaction L-threonyl-[protein] + ATP = O-phospho-L-threonyl-[protein] + ADP + H(+). The protein is LEAF RUST 10 DISEASE-RESISTANCE LOCUS RECEPTOR-LIKE PROTEIN KINASE-like 1.3 of Arabidopsis thaliana (Mouse-ear cress).